A 154-amino-acid polypeptide reads, in one-letter code: Large ribosomal subunit protein uL13 (154 aa).

The segment at 131–154 (DHKHEAQQPEVVDFKSMNSKNTRG) is disordered.

Belongs to the universal ribosomal protein uL13 family. Part of the 50S ribosomal subunit.

In terms of biological role, this protein is one of the early assembly proteins of the 50S ribosomal subunit, although it is not seen to bind rRNA by itself. It is important during the early stages of 50S assembly. The sequence is that of Large ribosomal subunit protein uL13 from Maricaulis maris (strain MCS10) (Caulobacter maris).